The chain runs to 149 residues: Thioredoxin-like protein 4B (149 aa).

This sequence belongs to the DIM1 family. In terms of assembly, homodimer. Interacts with the U5-102 kDa protein subunit of the spliceosome.

It is found in the nucleus. Its function is as follows. Essential role in pre-mRNA splicing. Required in cell cycle progression for S/G(2) transition. This Homo sapiens (Human) protein is Thioredoxin-like protein 4B (TXNL4B).